Consider the following 166-residue polypeptide: Phospholipase A2 inhibitor clone 05 (166 aa).

An N-terminal signal peptide occupies residues 1 to 19 (MRLILLSSLLLLGIFLADG). The C-type lectin domain occupies 46 to 161 (LKGAFLTVHR…CDDNLLVVCE (116 aa)). Intrachain disulfides connect Cys-83–Cys-160 and Cys-138–Cys-152. Asn-122 carries N-linked (GlcNAc...) asparagine glycosylation.

Belongs to the alpha-type phospholipase A2 inhibitor family. In terms of assembly, homotrimer; non-covalently linked. As to expression, expressed by the liver.

It localises to the secreted. In terms of biological role, this phospholipase A2 inhibitor binds directly phospholipase A2 in the presence or absence of calcium. In Bothrops moojeni (Lance-headed viper), this protein is Phospholipase A2 inhibitor clone 05.